A 185-amino-acid polypeptide reads, in one-letter code: Threonylcarbamoyl-AMP synthase (185 aa).

One can recognise a YrdC-like domain in the interval 4–185 (SWRVQQAAQD…IATGQVMRAG (182 aa)).

It belongs to the SUA5 family. TsaC subfamily.

The protein localises to the cytoplasm. The enzyme catalyses L-threonine + hydrogencarbonate + ATP = L-threonylcarbamoyladenylate + diphosphate + H2O. In terms of biological role, required for the formation of a threonylcarbamoyl group on adenosine at position 37 (t(6)A37) in tRNAs that read codons beginning with adenine. Catalyzes the conversion of L-threonine, HCO(3)(-)/CO(2) and ATP to give threonylcarbamoyl-AMP (TC-AMP) as the acyladenylate intermediate, with the release of diphosphate. The sequence is that of Threonylcarbamoyl-AMP synthase from Pseudomonas savastanoi pv. phaseolicola (strain 1448A / Race 6) (Pseudomonas syringae pv. phaseolicola (strain 1448A / Race 6)).